The chain runs to 209 residues: LexA repressor (209 aa).

The segment at residues 32–52 (VREIGKAVDLSSTSTVHGHLA) is a DNA-binding region (H-T-H motif). Residues Ser131 and Lys169 each act as for autocatalytic cleavage activity in the active site.

The protein belongs to the peptidase S24 family. In terms of assembly, homodimer.

It catalyses the reaction Hydrolysis of Ala-|-Gly bond in repressor LexA.. Its function is as follows. Represses a number of genes involved in the response to DNA damage (SOS response), including recA and lexA. In the presence of single-stranded DNA, RecA interacts with LexA causing an autocatalytic cleavage which disrupts the DNA-binding part of LexA, leading to derepression of the SOS regulon and eventually DNA repair. In Enterococcus faecalis (strain ATCC 700802 / V583), this protein is LexA repressor.